A 336-amino-acid polypeptide reads, in one-letter code: Holliday junction branch migration complex subunit RuvB (336 aa).

The large ATPase domain (RuvB-L) stretch occupies residues 1 to 181 (MDRIVEIEKV…FGMDFRLQFY (181 aa)). ATP contacts are provided by residues Leu20, Arg21, Gly62, Lys65, Thr66, Thr67, 128-130 (EDF), Arg171, Tyr181, and Arg218. Residue Thr66 participates in Mg(2+) binding. Positions 182–252 (TSSELSRIVQ…RAKEGLNALG (71 aa)) are small ATPAse domain (RuvB-S). The interval 255–336 (SLGFDEMDIR…KIDIEKGLFE (82 aa)) is head domain (RuvB-H). DNA is bound by residues Arg309 and Arg314.

The protein belongs to the RuvB family. As to quaternary structure, homohexamer. Forms an RuvA(8)-RuvB(12)-Holliday junction (HJ) complex. HJ DNA is sandwiched between 2 RuvA tetramers; dsDNA enters through RuvA and exits via RuvB. An RuvB hexamer assembles on each DNA strand where it exits the tetramer. Each RuvB hexamer is contacted by two RuvA subunits (via domain III) on 2 adjacent RuvB subunits; this complex drives branch migration. In the full resolvosome a probable DNA-RuvA(4)-RuvB(12)-RuvC(2) complex forms which resolves the HJ.

The protein localises to the cytoplasm. It catalyses the reaction ATP + H2O = ADP + phosphate + H(+). Its function is as follows. The RuvA-RuvB-RuvC complex processes Holliday junction (HJ) DNA during genetic recombination and DNA repair, while the RuvA-RuvB complex plays an important role in the rescue of blocked DNA replication forks via replication fork reversal (RFR). RuvA specifically binds to HJ cruciform DNA, conferring on it an open structure. The RuvB hexamer acts as an ATP-dependent pump, pulling dsDNA into and through the RuvAB complex. RuvB forms 2 homohexamers on either side of HJ DNA bound by 1 or 2 RuvA tetramers; 4 subunits per hexamer contact DNA at a time. Coordinated motions by a converter formed by DNA-disengaged RuvB subunits stimulates ATP hydrolysis and nucleotide exchange. Immobilization of the converter enables RuvB to convert the ATP-contained energy into a lever motion, pulling 2 nucleotides of DNA out of the RuvA tetramer per ATP hydrolyzed, thus driving DNA branch migration. The RuvB motors rotate together with the DNA substrate, which together with the progressing nucleotide cycle form the mechanistic basis for DNA recombination by continuous HJ branch migration. Branch migration allows RuvC to scan DNA until it finds its consensus sequence, where it cleaves and resolves cruciform DNA. The protein is Holliday junction branch migration complex subunit RuvB of Campylobacter concisus (strain 13826).